We begin with the raw amino-acid sequence, 293 residues long: Indole-3-glycerol phosphate synthase (293 aa).

This sequence belongs to the TrpC family.

The enzyme catalyses 1-(2-carboxyphenylamino)-1-deoxy-D-ribulose 5-phosphate + H(+) = (1S,2R)-1-C-(indol-3-yl)glycerol 3-phosphate + CO2 + H2O. It participates in amino-acid biosynthesis; L-tryptophan biosynthesis; L-tryptophan from chorismate: step 4/5. In Rippkaea orientalis (strain PCC 8801 / RF-1) (Cyanothece sp. (strain PCC 8801)), this protein is Indole-3-glycerol phosphate synthase.